A 355-amino-acid polypeptide reads, in one-letter code: Galactoside 2-alpha-L-fucosyltransferase (355 aa).

At 1–15 (MRNVKGLFSYMTKTK) the chain is on the cytoplasmic side. A helical; Signal-anchor for type II membrane protein membrane pass occupies residues 16 to 36 (SFYISIIVIIFIIFIVNRMGP). The Lumenal segment spans residues 37–355 (RNYNYKQIGT…MSRNGSIISK (319 aa)). N-linked (GlcNAc...) asparagine glycosylation is found at N92, N311, and N349.

The protein belongs to the glycosyltransferase 11 family. Expression is restricted to the 20 intestinal cells in larvae and adult.

It is found in the golgi apparatus. Its subcellular location is the golgi stack membrane. It functions in the pathway protein modification; protein glycosylation. Selectively catalyzes the addition of fucose in alpha 1-2 linkage to Gal-beta-(1-&gt;4)-Xyl-beta-R, Gal-beta-(1-&gt;6)-GlcNAc-R, Gal-beta-(1-&gt;3)-Gal-beta-(1-&gt;4)-Glc and Gal-beta-(1-&gt;3)-Gal-beta-(1-&gt;4)-Xyl-R acceptors but not Gal-beta-(1-&gt;3)-GlcNAc-beta-(1-&gt;3)-Gal-beta-(1-&gt;4)-Glc. Unlike in mammals, unable to fucosylate Gal-beta-(1-&gt;4)-Glc-beta-R. The chain is Galactoside 2-alpha-L-fucosyltransferase from Caenorhabditis elegans.